The primary structure comprises 290 residues: MEWSLTQNKLLAFHRLMRTDKPIGALLLLWPTLWALWVATPGVPPLWILAVFVAGVWLMRAAGCVVNDYADRKFDGHVKRTANRPLPSGAVTEKEARTLFVVLVLLAFLLVLTLNTMTILLSVAALALAWVYPFMKRYTHLPQVVLGAAFGWSIPMAFAAVSESVPLSCWLMFLANILWAVAYDTQYAMVDRDDDVKIGIKSTAILFGQYDKFIIGVLQIGVMVLMALIGWLNGLDWGYYWSILVAGGLFVYQQKLIANREREACFKAFMNNNYVGLVLFLGLAMSYWHF.

7 helical membrane-spanning segments follow: residues 33–53, 99–119, 141–161, 163–183, 213–233, 237–257, and 268–288; these read LWAL…AVFV, LFVV…TMTI, LPQV…FAAV, ESVP…AVAY, FIIG…GWLN, WGYY…QKLI, and AFMN…MSYW.

Belongs to the UbiA prenyltransferase family. It depends on Mg(2+) as a cofactor.

It localises to the cell inner membrane. It catalyses the reaction all-trans-octaprenyl diphosphate + 4-hydroxybenzoate = 4-hydroxy-3-(all-trans-octaprenyl)benzoate + diphosphate. It functions in the pathway cofactor biosynthesis; ubiquinone biosynthesis. Catalyzes the prenylation of para-hydroxybenzoate (PHB) with an all-trans polyprenyl group. Mediates the second step in the final reaction sequence of ubiquinone-8 (UQ-8) biosynthesis, which is the condensation of the polyisoprenoid side chain with PHB, generating the first membrane-bound Q intermediate 3-octaprenyl-4-hydroxybenzoate. This Escherichia fergusonii (strain ATCC 35469 / DSM 13698 / CCUG 18766 / IAM 14443 / JCM 21226 / LMG 7866 / NBRC 102419 / NCTC 12128 / CDC 0568-73) protein is 4-hydroxybenzoate octaprenyltransferase.